We begin with the raw amino-acid sequence, 808 residues long: Disks large-associated protein 5 (808 aa).

2 positions are modified to phosphoserine: Ser-66 and Ser-70. The stretch at 88–119 forms a coiled coil; sequence QRKQLLQKYKEEKQLQKLKEQREKAKRGVFKV. The tract at residues 134–282 is disordered; sequence QRGAKAEPEK…QTRETSEMGP (149 aa). 2 stretches are compositionally biased toward basic and acidic residues: residues 135–145 and 180–193; these read RGAKAEPEKAF and QTSEKQPLDRERKV. Ser-201 carries the post-translational modification Phosphoserine. 2 stretches are compositionally biased toward basic and acidic residues: residues 232-241 and 249-278; these read TNEKGSERMR and KKPEGKPDKVIPSKVERDEKHLDSQTRETS. At Ser-328 the chain carries Phosphoserine. Phosphothreonine is present on residues Thr-337 and Thr-386. Residues 377 to 413 form a disordered region; it reads HVLNQKGASTSDSNHASVKGVPCSEGSEGQTSQPPHD. Positions 382–392 are enriched in polar residues; the sequence is KGASTSDSNHA. Ser-598 carries the phosphoserine modification. Ser-607 is subject to Phosphoserine; by AURKA. Ser-612 carries the phosphoserine modification. Thr-617 is modified (phosphothreonine). Residue Ser-620 is modified to Phosphoserine. The disordered stretch occupies residues 629–654; it reads RAAGDLLRQKMPLKKPDPQSSKSEHV. Residues 642 to 654 are compositionally biased toward basic and acidic residues; sequence KKPDPQSSKSEHV. Position 728 is a phosphothreonine (Thr-728). A disordered region spans residues 735-757; that stretch reads SNPETNTSSQSNTSQEEAEASQS. At Ser-743 the chain carries Phosphoserine. Ser-797 bears the Phosphoserine; by AURKA mark. Phosphoserine is present on Ser-806.

The protein belongs to the SAPAP family. Interacts with CDC2. Interacts with the C-terminal proline-rich region of FBXO7. Recruited by FBXO7 to a SCF (SKP1-CUL1-F-box) protein complex in a CDC2/Cyclin B-phosphorylation dependent manner. Interacts with CDH1. Post-translationally, ubiquitinated, leading to its degradation. In terms of processing, decreased phosphorylation levels are associated with the differentiation of intestinal epithelial cells. As to expression, expressed at low levels in normal resting liver. Up-regulated in regenerating liver after partial hepatectomy.

It localises to the nucleus. The protein localises to the cytoplasm. The protein resides in the cytoskeleton. Its subcellular location is the spindle. Functionally, potential cell cycle regulator that may play a role in carcinogenesis of cancer cells. Mitotic phosphoprotein regulated by the ubiquitin-proteasome pathway. Key regulator of adherens junction integrity and differentiation that may be involved in CDH1-mediated adhesion and signaling in epithelial cells. This chain is Disks large-associated protein 5 (Dlgap5), found in Mus musculus (Mouse).